A 287-amino-acid chain; its full sequence is Probable ribosomal RNA small subunit methyltransferase A (287 aa).

S-adenosyl-L-methionine contacts are provided by H29, L31, G56, E77, D102, and N117.

It belongs to the class I-like SAM-binding methyltransferase superfamily. rRNA adenine N(6)-methyltransferase family. RsmA subfamily.

The protein localises to the cytoplasm. Specifically dimethylates two adjacent adenosines in the loop of a conserved hairpin near the 3'-end of 16S rRNA in the 30S particle. May play a critical role in biogenesis of 30S subunits. The polypeptide is Probable ribosomal RNA small subunit methyltransferase A (Methanosarcina barkeri (strain Fusaro / DSM 804)).